The following is a 364-amino-acid chain: Chorismate synthase (364 aa).

Residue R48 coordinates NADP(+). Residues 131–133 (RSS), 243–244 (NA), G288, 303–307 (KPTSS), and R329 each bind FMN.

This sequence belongs to the chorismate synthase family. As to quaternary structure, homotetramer. The cofactor is FMNH2.

The enzyme catalyses 5-O-(1-carboxyvinyl)-3-phosphoshikimate = chorismate + phosphate. The protein operates within metabolic intermediate biosynthesis; chorismate biosynthesis; chorismate from D-erythrose 4-phosphate and phosphoenolpyruvate: step 7/7. Catalyzes the anti-1,4-elimination of the C-3 phosphate and the C-6 proR hydrogen from 5-enolpyruvylshikimate-3-phosphate (EPSP) to yield chorismate, which is the branch point compound that serves as the starting substrate for the three terminal pathways of aromatic amino acid biosynthesis. This reaction introduces a second double bond into the aromatic ring system. In Brucella abortus (strain S19), this protein is Chorismate synthase.